The chain runs to 471 residues: Glutamate--tRNA ligase (471 aa).

A 'HIGH' region motif is present at residues 9 to 19 (PSPTGYLHVGG). Zn(2+)-binding residues include Cys-98, Cys-100, Cys-125, and His-127. The 'KMSKS' region motif lies at 237-241 (KLSKR). Lys-240 provides a ligand contact to ATP.

It belongs to the class-I aminoacyl-tRNA synthetase family. Glutamate--tRNA ligase type 1 subfamily. Monomer. Zn(2+) is required as a cofactor.

Its subcellular location is the cytoplasm. The enzyme catalyses tRNA(Glu) + L-glutamate + ATP = L-glutamyl-tRNA(Glu) + AMP + diphosphate. Its function is as follows. Catalyzes the attachment of glutamate to tRNA(Glu) in a two-step reaction: glutamate is first activated by ATP to form Glu-AMP and then transferred to the acceptor end of tRNA(Glu). This Salmonella arizonae (strain ATCC BAA-731 / CDC346-86 / RSK2980) protein is Glutamate--tRNA ligase.